The chain runs to 471 residues: 3-isopropylmalate dehydratase large subunit (471 aa).

Residues cysteine 347, cysteine 407, and cysteine 410 each contribute to the [4Fe-4S] cluster site.

This sequence belongs to the aconitase/IPM isomerase family. LeuC type 1 subfamily. As to quaternary structure, heterodimer of LeuC and LeuD. The cofactor is [4Fe-4S] cluster.

The catalysed reaction is (2R,3S)-3-isopropylmalate = (2S)-2-isopropylmalate. Its pathway is amino-acid biosynthesis; L-leucine biosynthesis; L-leucine from 3-methyl-2-oxobutanoate: step 2/4. Functionally, catalyzes the isomerization between 2-isopropylmalate and 3-isopropylmalate, via the formation of 2-isopropylmaleate. The protein is 3-isopropylmalate dehydratase large subunit of Vibrio parahaemolyticus serotype O3:K6 (strain RIMD 2210633).